We begin with the raw amino-acid sequence, 235 residues long: 2-C-methyl-D-erythritol 4-phosphate cytidylyltransferase (235 aa).

Belongs to the IspD/TarI cytidylyltransferase family. IspD subfamily.

The enzyme catalyses 2-C-methyl-D-erythritol 4-phosphate + CTP + H(+) = 4-CDP-2-C-methyl-D-erythritol + diphosphate. Its pathway is isoprenoid biosynthesis; isopentenyl diphosphate biosynthesis via DXP pathway; isopentenyl diphosphate from 1-deoxy-D-xylulose 5-phosphate: step 2/6. Its function is as follows. Catalyzes the formation of 4-diphosphocytidyl-2-C-methyl-D-erythritol from CTP and 2-C-methyl-D-erythritol 4-phosphate (MEP). The polypeptide is 2-C-methyl-D-erythritol 4-phosphate cytidylyltransferase (Pseudomonas entomophila (strain L48)).